Here is a 326-residue protein sequence, read N- to C-terminus: Apoptosis facilitator Bcl-2-like protein 14 (326 aa).

Position 44 is a phosphoserine (S44). The tract at residues 100–147 (AEKEEDSQSSPPEICAQAQRSGVPQARPRSPKWPRSRSSMDQRLEHKA) is disordered. A compositionally biased stretch (basic and acidic residues) spans 137-147 (SSMDQRLEHKA). The short motif at 211-225 (IVELLKYSGEQLERE) is the BH3 element. Positions 307–314 (WIQQHGGW) match the BH2 motif.

Belongs to the Bcl-2 family. Post-translationally, phosphorylated by MELK, leading to inhibit its pro-apoptotic function.

The protein resides in the cytoplasm. In terms of biological role, plays a role in apoptosis. The protein is Apoptosis facilitator Bcl-2-like protein 14 (BCL2L14) of Bos taurus (Bovine).